The chain runs to 254 residues: Putative hydro-lyase SACE_1553 (254 aa).

It belongs to the D-glutamate cyclase family.

The polypeptide is Putative hydro-lyase SACE_1553 (Saccharopolyspora erythraea (strain ATCC 11635 / DSM 40517 / JCM 4748 / NBRC 13426 / NCIMB 8594 / NRRL 2338)).